We begin with the raw amino-acid sequence, 280 residues long: Probable cell division protein WhiA (280 aa).

A DNA-binding region (H-T-H motif) is located at residues 246–279 (SLEQIAQFFERKYKVQITRSGIQHLNAKLKKLNQ).

It belongs to the WhiA family.

Functionally, involved in cell division and chromosome segregation. This is Probable cell division protein WhiA from Mycoplasma pneumoniae (strain ATCC 29342 / M129 / Subtype 1) (Mycoplasmoides pneumoniae).